Consider the following 84-residue polypeptide: Beta-cardiotoxin CTX15 (84 aa).

The N-terminal stretch at 1-21 is a signal peptide; sequence MKTLLLTLVVVTIVCLDLGYT. Disulfide bonds link cysteine 24-cysteine 43, cysteine 36-cysteine 61, cysteine 65-cysteine 76, and cysteine 77-cysteine 82.

The protein belongs to the three-finger toxin family. Short-chain subfamily. Aminergic toxin sub-subfamily. Expressed by the venom gland.

The protein localises to the secreted. In terms of biological role, acts as a beta-blocker by binding to beta-1 and beta-2 adrenergic receptors (ADRB1 and ADRB2). It dose-dependently decreases the heart rate (bradycardia), whereas conventional cardiotoxins increases it. At 100 mg/kg, intraperitoneal injection into mice provokes labored breathing, impaired locomotion, lack of response to external stimuli, and death (after 30 minutes). The polypeptide is Beta-cardiotoxin CTX15 (Ophiophagus hannah (King cobra)).